The primary structure comprises 93 residues: MKKLTEKEIREELNKMKGWSLKGNVIEKTFLFHDFKEAVNFLNKVQPIADSMNHHPDVCIYYNKVIVQLTTHDAGGITDLDVELAKKIDELLT.

This sequence belongs to the pterin-4-alpha-carbinolamine dehydratase family.

It catalyses the reaction (4aS,6R)-4a-hydroxy-L-erythro-5,6,7,8-tetrahydrobiopterin = (6R)-L-erythro-6,7-dihydrobiopterin + H2O. This Sulfurisphaera tokodaii (strain DSM 16993 / JCM 10545 / NBRC 100140 / 7) (Sulfolobus tokodaii) protein is Putative pterin-4-alpha-carbinolamine dehydratase.